Here is a 180-residue protein sequence, read N- to C-terminus: Large ribosomal subunit protein uL6 (180 aa).

The protein belongs to the universal ribosomal protein uL6 family. Part of the 50S ribosomal subunit.

In terms of biological role, this protein binds to the 23S rRNA, and is important in its secondary structure. It is located near the subunit interface in the base of the L7/L12 stalk, and near the tRNA binding site of the peptidyltransferase center. The protein is Large ribosomal subunit protein uL6 of Borreliella burgdorferi (strain ATCC 35210 / DSM 4680 / CIP 102532 / B31) (Borrelia burgdorferi).